Reading from the N-terminus, the 527-residue chain is Chorismate synthase (527 aa).

Catalysis depends on residues histidine 17, histidine 104, and aspartate 485.

This sequence belongs to the chorismate synthase family.

The protein localises to the cytoplasm. The protein resides in the cytosol. It catalyses the reaction 5-O-(1-carboxyvinyl)-3-phosphoshikimate = chorismate + phosphate. The catalysed reaction is FMNH2 + NADP(+) = FMN + NADPH + 2 H(+). The protein operates within metabolic intermediate biosynthesis; chorismate biosynthesis; chorismate from D-erythrose 4-phosphate and phosphoenolpyruvate: step 7/7. Bifunctional chorismate synthase and flavin reductase. Catalyzes the conversion of 5-enolpyruvylshikimate 3-phosphate (EPSP) to form chorismate. Acts also as a flavin reductase (FR) able to generate reduced flavin mononucleotide in the presence of NADPH. In Plasmodium falciparum (isolate 3D7), this protein is Chorismate synthase.